The chain runs to 555 residues: Beta-fructofuranosidase, cell wall isozyme (555 aa).

An N-terminal signal peptide occupies residues 1-22; sequence MAISSIFLLSLFSLIYVIPIEA. Substrate-binding positions include 58–61, Gln77, Trp85, and 120–121; these read WIND and WS. Asp61 is a catalytic residue. Residue Asp140 is part of the active site. N-linked (GlcNAc...) asparagine glycans are attached at residues Asn154 and Asn181. Substrate is bound by residues 186-187, Glu241, and Asp277; that span reads RD. An N-linked (GlcNAc...) asparagine glycan is attached at Asn337. Cys435 and Cys481 are joined by a disulfide.

It belongs to the glycosyl hydrolase 32 family.

The catalysed reaction is Hydrolysis of terminal non-reducing beta-D-fructofuranoside residues in beta-D-fructofuranosides.. This chain is Beta-fructofuranosidase, cell wall isozyme (BFRUCT1), found in Pisum sativum (Garden pea).